Consider the following 1714-residue polypeptide: Collagen alpha-1(XXIV) chain (1714 aa).

The first 35 residues, 1-35 (MHLRAHRTRRGKVSPTAKTKSLLHFIVLCVAGVVV), serve as a signal peptide directing secretion. Residues 141-217 (KLVVHIRGKQ…MNNNSIHFEG (77 aa)) form the Laminin G-like domain. 3 N-linked (GlcNAc...) asparagine glycosylation sites follow: asparagine 155, asparagine 321, and asparagine 376. 17 Collagen-like domains span residues 487-542 (LRGP…PGFS), 552-611 (GDQG…EGNP), 660-719 (GPAG…KGEQ), 741-797 (GPPG…RGPP), 798-857 (GPPG…TGPV), 858-887 (GLPGEVGMTGSIGEKGERGSPGPLGPQGEK), 888-947 (GVMG…KGEK), 948-1007 (GDQG…PGEM), 1011-1052 (GPPG…PGAP), 1053-1112 (GEEG…PGQR), 1116-1170 (GKKG…GIPG), 1172-1196 (RGHQGQPGPSGLPGPKGEKGYPGED), 1201-1249 (GPPG…GEPG), 1252-1306 (GEQG…GNPG), 1309-1353 (GPPG…QGPK), 1354-1413 (GEQG…EGDA), and 1420-1479 (GPKG…PGPR). Residues 487 to 1481 (LRGPKGDTGP…PPGAPGPRKQ (995 aa)) form a disordered region. Pro residues predominate over residues 496–505 (PPGPPGPAGI). 2 stretches are compositionally biased toward low complexity: residues 574–587 (HPGLPGLPGEQGIP) and 685–701 (SVGPVGPIGPAGIPGPM). A compositionally biased stretch (pro residues) spans 893 to 902 (PGPPGVPGPI). The span at 985–1019 (DRGLPGEPGLRGLQGDVGPPGEMGMEGPPGTEGES) shows a compositional bias: low complexity. 2 stretches are compositionally biased toward gly residues: residues 1035-1044 (GSVGGTGEPG) and 1065-1074 (GVPGGRGLPG). 2 stretches are compositionally biased toward low complexity: residues 1132 to 1145 (SRGPPGKIGKSGPK) and 1174 to 1186 (HQGQPGPSGLPGP). Over residues 1256 to 1266 (LKGERGSEGNK) the composition is skewed to basic and acidic residues. Positions 1271–1293 (APGPSGKPGIPGLQGLLGPKGIQ) are enriched in low complexity. A compositionally biased stretch (gly residues) spans 1318–1327 (GIRGGPGRTG). Positions 1466-1476 (QPGPPGPPGAP) are enriched in pro residues. Residues 1515–1714 (EEIFKTLNYL…YIDSSSVCFL (200 aa)) form the Fibrillar collagen NC1 domain.

This sequence belongs to the fibrillar collagen family.

It localises to the secreted. Its subcellular location is the extracellular space. It is found in the extracellular matrix. Functionally, may participate in regulating type I collagen fibrillogenesis at specific anatomical locations during fetal development. This chain is Collagen alpha-1(XXIV) chain (COL24A1), found in Homo sapiens (Human).